A 555-amino-acid chain; its full sequence is CTP synthase (555 aa).

Residues 1–265 (MTRYIFITGG…GNRVCEKLNI (265 aa)) are amidoligase domain. Serine 13 is a binding site for CTP. Serine 13 is a UTP binding site. Residues 14-19 (SLGKGI) and aspartate 71 contribute to the ATP site. Residues aspartate 71 and glutamate 139 each contribute to the Mg(2+) site. Residues 146–148 (DIE), 186–191 (KTKPTQ), and lysine 222 each bind CTP. UTP is bound by residues 186-191 (KTKPTQ) and lysine 222. A Glutamine amidotransferase type-1 domain is found at 290 to 541 (TVAVVGKYVD…IKAGLAAKEA (252 aa)). An L-glutamine-binding site is contributed by glycine 351. Residue cysteine 378 is the Nucleophile; for glutamine hydrolysis of the active site. L-glutamine-binding positions include 379 to 382 (LGMQ), glutamate 402, and arginine 469. Active-site residues include histidine 514 and glutamate 516.

Belongs to the CTP synthase family. As to quaternary structure, homotetramer.

It catalyses the reaction UTP + L-glutamine + ATP + H2O = CTP + L-glutamate + ADP + phosphate + 2 H(+). It carries out the reaction L-glutamine + H2O = L-glutamate + NH4(+). The enzyme catalyses UTP + NH4(+) + ATP = CTP + ADP + phosphate + 2 H(+). Its pathway is pyrimidine metabolism; CTP biosynthesis via de novo pathway; CTP from UDP: step 2/2. Allosterically activated by GTP, when glutamine is the substrate; GTP has no effect on the reaction when ammonia is the substrate. The allosteric effector GTP functions by stabilizing the protein conformation that binds the tetrahedral intermediate(s) formed during glutamine hydrolysis. Inhibited by the product CTP, via allosteric rather than competitive inhibition. Its function is as follows. Catalyzes the ATP-dependent amination of UTP to CTP with either L-glutamine or ammonia as the source of nitrogen. Regulates intracellular CTP levels through interactions with the four ribonucleotide triphosphates. This is CTP synthase from Coxiella burnetii (strain RSA 331 / Henzerling II).